The following is a 249-amino-acid chain: LexA repressor (249 aa).

The tract at residues 1-25 (MAAAATGGRATSQPKKTTKGLTPRQ) is disordered. Positions 45–65 (MREIGDTVGLASLSSVTHQLS) form a DNA-binding region, H-T-H motif. Active-site for autocatalytic cleavage activity residues include S173 and K210.

Belongs to the peptidase S24 family. Homodimer.

The enzyme catalyses Hydrolysis of Ala-|-Gly bond in repressor LexA.. In terms of biological role, represses a number of genes involved in the response to DNA damage (SOS response), including recA and lexA. In the presence of single-stranded DNA, RecA interacts with LexA causing an autocatalytic cleavage which disrupts the DNA-binding part of LexA, leading to derepression of the SOS regulon and eventually DNA repair. The chain is LexA repressor from Pseudarthrobacter chlorophenolicus (strain ATCC 700700 / DSM 12829 / CIP 107037 / JCM 12360 / KCTC 9906 / NCIMB 13794 / A6) (Arthrobacter chlorophenolicus).